The chain runs to 326 residues: Lipoyl synthase (326 aa).

The [4Fe-4S] cluster site is built by C74, C79, C85, C100, C104, C107, and S314. The region spanning 85–303 is the Radical SAM core domain; that stretch reads CFGKGTATFM…EEEAYKMGFT (219 aa).

Belongs to the radical SAM superfamily. Lipoyl synthase family. [4Fe-4S] cluster is required as a cofactor.

The protein localises to the cytoplasm. The enzyme catalyses [[Fe-S] cluster scaffold protein carrying a second [4Fe-4S](2+) cluster] + N(6)-octanoyl-L-lysyl-[protein] + 2 oxidized [2Fe-2S]-[ferredoxin] + 2 S-adenosyl-L-methionine + 4 H(+) = [[Fe-S] cluster scaffold protein] + N(6)-[(R)-dihydrolipoyl]-L-lysyl-[protein] + 4 Fe(3+) + 2 hydrogen sulfide + 2 5'-deoxyadenosine + 2 L-methionine + 2 reduced [2Fe-2S]-[ferredoxin]. It participates in protein modification; protein lipoylation via endogenous pathway; protein N(6)-(lipoyl)lysine from octanoyl-[acyl-carrier-protein]: step 2/2. In terms of biological role, catalyzes the radical-mediated insertion of two sulfur atoms into the C-6 and C-8 positions of the octanoyl moiety bound to the lipoyl domains of lipoate-dependent enzymes, thereby converting the octanoylated domains into lipoylated derivatives. The protein is Lipoyl synthase of Delftia acidovorans (strain DSM 14801 / SPH-1).